Consider the following 161-residue polypeptide: Tropomyosin (161 aa).

Positions 1-161 (MDKLREKINA…DEVHQALEDL (161 aa)) form a coiled coil. The span at 40–52 (EQEYESLSRKSEA) shows a compositional bias: basic and acidic residues. 2 disordered regions span residues 40 to 65 (EQEYESLSRKSEAAESQLEELEEETK) and 107 to 134 (EKMRQTDVKAEHFERRVQSLERERDDME).

As to quaternary structure, homodimer.

The protein localises to the cytoplasm. It localises to the cytoskeleton. Functionally, forms part of the F-actin contractile ring during cytokinesis. The sequence is that of Tropomyosin (cdc8) from Schizosaccharomyces pombe (strain 972 / ATCC 24843) (Fission yeast).